We begin with the raw amino-acid sequence, 250 residues long: Putative HTH-type transcriptional regulatory protein PAE1627 (250 aa).

Residues 129–183 (LRAKRQQAGLSLGTLATNLGVTRETVYRYERGEIEAPLKIAEKLINMFGEDITKK) form the HTH cro/C1-type domain. A DNA-binding region (H-T-H motif) is located at residues 140–159 (LGTLATNLGVTRETVYRYER).

This chain is Putative HTH-type transcriptional regulatory protein PAE1627, found in Pyrobaculum aerophilum (strain ATCC 51768 / DSM 7523 / JCM 9630 / CIP 104966 / NBRC 100827 / IM2).